The following is a 445-amino-acid chain: Putative U-box domain-containing protein 47 (445 aa).

One can recognise a U-box domain in the interval 64–137; the sequence is EVPKEFICTL…KEWCLIHNFD (74 aa).

The catalysed reaction is S-ubiquitinyl-[E2 ubiquitin-conjugating enzyme]-L-cysteine + [acceptor protein]-L-lysine = [E2 ubiquitin-conjugating enzyme]-L-cysteine + N(6)-ubiquitinyl-[acceptor protein]-L-lysine.. It participates in protein modification; protein ubiquitination. In terms of biological role, functions as an E3 ubiquitin ligase. The sequence is that of Putative U-box domain-containing protein 47 (PUB47) from Arabidopsis thaliana (Mouse-ear cress).